Reading from the N-terminus, the 900-residue chain is Probable 2-oxoadipate dehydrogenase complex component E1 homolog (900 aa).

The protein belongs to the alpha-ketoglutarate dehydrogenase family. It depends on thiamine diphosphate as a cofactor.

It is found in the mitochondrion. It carries out the reaction N(6)-[(R)-lipoyl]-L-lysyl-[protein] + 2-oxoadipate + H(+) = N(6)-[(R)-S(8)-glutaryldihydrolipoyl]-L-lysyl-[protein] + CO2. Its function is as follows. 2-oxoadipate dehydrogenase (E1a) component of the 2-oxoadipate dehydrogenase complex (OADHC). Participates in the first step, rate limiting for the overall conversion of 2-oxoadipate (alpha-ketoadipate) to glutaryl-CoA and CO(2) catalyzed by the whole OADHC. Catalyzes the irreversible decarboxylation of 2-oxoadipate via the thiamine diphosphate (ThDP) cofactor and subsequent transfer of the decarboxylated acyl intermediate on an oxidized dihydrolipoyl group that is covalently amidated to the E2 enzyme (dihydrolipoyllysine-residue succinyltransferase or DLST). This Dictyostelium discoideum (Social amoeba) protein is Probable 2-oxoadipate dehydrogenase complex component E1 homolog (odhA).